The sequence spans 94 residues: Parvalbumin beta 4 (94 aa).

At alanine 1 the chain carries N-acetylalanine. EF-hand domains lie at 36–63 (FFAIIDQDHSGFIEEEELKLFLQTFSAG) and 67–94 (LSDAETKTFLAAGDVDGDGMIGVDEFAA). Ca(2+) is bound by residues aspartate 41, aspartate 43, serine 45, phenylalanine 47, glutamate 49, glutamate 52, aspartate 80, aspartate 82, aspartate 84, methionine 86, and glutamate 91.

Belongs to the parvalbumin family.

Its function is as follows. In muscle, parvalbumin is thought to be involved in relaxation after contraction. It binds two calcium ions. The sequence is that of Parvalbumin beta 4 from Merluccius bilinearis (Silver hake).